Reading from the N-terminus, the 241-residue chain is MRVVVSIGGSVLAPGLDADQVDAHADAINELTDAGCEVGAVVGGGGVARDYIGTARELGANEIELDDIGVDVTRLNARLLIAALGGDAAPSPAEDYEDAGEAMRRGDIAVMGGVVAGQTTDAVSAALAEYTDADLLLYATSVPGVFSADPNEDADAEHFTRMTAGELVDIIADIEMNAGSSAPVDLLAAKLIERSGVRTIVLDGTDPRRIVDAVRFGEHDGTDVIPDGTDNQMTYWADNQE.

Residue 9-10 (GS) participates in ATP binding. Residue Gly-44 coordinates UMP. Residues Gly-45 and Arg-49 each contribute to the ATP site. Residues Asp-66 and 114–120 (VVAGQTT) contribute to the UMP site. ATP-binding residues include Thr-140, Phe-146, and Asp-149.

Belongs to the UMP kinase family. As to quaternary structure, homohexamer.

The protein localises to the cytoplasm. It catalyses the reaction UMP + ATP = UDP + ADP. The protein operates within pyrimidine metabolism; CTP biosynthesis via de novo pathway; UDP from UMP (UMPK route): step 1/1. With respect to regulation, inhibited by UTP. In terms of biological role, catalyzes the reversible phosphorylation of UMP to UDP. In Halobacterium salinarum (strain ATCC 29341 / DSM 671 / R1), this protein is Uridylate kinase.